We begin with the raw amino-acid sequence, 198 residues long: Recombination protein RecR (198 aa).

Residues 57 to 72 (CRQCRTLSEEELCPQC) form a C4-type zinc finger. The region spanning 80–174 (SLLCVVEGPL…TLSRIAHGVP (95 aa)) is the Toprim domain.

The protein belongs to the RecR family.

Functionally, may play a role in DNA repair. It seems to be involved in an RecBC-independent recombinational process of DNA repair. It may act with RecF and RecO. This Pseudomonas paraeruginosa (strain DSM 24068 / PA7) (Pseudomonas aeruginosa (strain PA7)) protein is Recombination protein RecR.